We begin with the raw amino-acid sequence, 542 residues long: Beta-amylase 2, chloroplastic (542 aa).

The transit peptide at 1–55 directs the protein to the chloroplast; that stretch reads MAIRLNHSVIPVSVKLGAPTRVSARSSLPFSVGDWRGVSTFSGARPLVLAKVKLR. The substrate site is built by Asp136, His176, and Asp184. Residue Glu269 is the Proton donor of the active site. 3 residues coordinate substrate: Lys377, His382, and Thr424. Glu465 functions as the Proton acceptor in the catalytic mechanism. Substrate-binding positions include 466-467 and Arg501; that span reads NA.

It belongs to the glycosyl hydrolase 14 family.

Its subcellular location is the plastid. The protein localises to the chloroplast. It catalyses the reaction Hydrolysis of (1-&gt;4)-alpha-D-glucosidic linkages in polysaccharides so as to remove successive maltose units from the non-reducing ends of the chains.. With respect to regulation, redox regulation; active in reducing conditions, inactive in oxidizing conditions. Low beta-amylase activity. Interacts poorly with starch or other alpha-1,4-glucan. The chain is Beta-amylase 2, chloroplastic (BAM2) from Arabidopsis thaliana (Mouse-ear cress).